The chain runs to 506 residues: Maturase K (506 aa).

This sequence belongs to the intron maturase 2 family. MatK subfamily.

The protein resides in the plastid. It localises to the chloroplast. In terms of biological role, usually encoded in the trnK tRNA gene intron. Probably assists in splicing its own and other chloroplast group II introns. In Styphnolobium japonicum (Japanese pagoda tree), this protein is Maturase K.